A 190-amino-acid polypeptide reads, in one-letter code: Superoxide dismutase [Cu-Zn] (190 aa).

Positions 1–23 (MKLTNLALAFTLFGASAVAFAHA) are cleaved as a signal peptide. Cu cation is bound by residues H83, H85, and H108. An intrachain disulfide couples C90 to C186. Zn(2+)-binding residues include H108, H117, H126, and D129. Residues 162–181 (MIHEGGDNHSDHPAPLGGGG) form a disordered region. H164 serves as a coordination point for Cu cation.

This sequence belongs to the Cu-Zn superoxide dismutase family. As to quaternary structure, homodimer. Cu cation is required as a cofactor. Zn(2+) serves as cofactor.

It localises to the periplasm. The catalysed reaction is 2 superoxide + 2 H(+) = H2O2 + O2. Functionally, destroys radicals which are normally produced within the cells and which are toxic to biological systems. This Actinobacillus pleuropneumoniae (Haemophilus pleuropneumoniae) protein is Superoxide dismutase [Cu-Zn] (sodC).